The primary structure comprises 296 residues: Regulatory protein PchR (296 aa).

The HTH araC/xylS-type domain occupies 201 to 296 (HAARDLLVGA…RYGISPSEIR (96 aa)). 2 DNA-binding regions (H-T-H motif) span residues 218–239 (DTLA…RKVF) and 266–288 (VSTV…RKRY).

Functionally, positive activator of the genes for pyochelin and ferripyochelin receptors. This chain is Regulatory protein PchR (pchR), found in Pseudomonas aeruginosa (strain ATCC 15692 / DSM 22644 / CIP 104116 / JCM 14847 / LMG 12228 / 1C / PRS 101 / PAO1).